A 320-amino-acid polypeptide reads, in one-letter code: MPNNVTVQELVDKVRLKVLQGEDYLQRKITTSDISRPALEFAGYFKHYPAARIQLLGITETSFAKDLTHEQREEYMTKMCMPQTPCFVISTNLPIPKELKKAAEDAKIPILGTHLTSSQILSNMTSYLLERLAPRKSLHGVLVDISGVGVLITGDSGVGKSETALELVRRGHRLIADDRVEVYARDEQTLVGTAPQILKHLMEIRGIGIIDVSTLYGTGAIMPSDQISLIVHLETWTPDVQFDRLGDRGDTQTIQGVIVPKVSVPVKTGRNLAIIIESAAMNYRAETMGYDATETFDRNLNQLIKQNSERDSKNNKGSAN.

Active-site residues include His-139 and Lys-160. An ATP-binding site is contributed by 154 to 161 (GDSGVGKS). A Mg(2+)-binding site is contributed by Ser-161. The active-site Proton acceptor; for phosphorylation activity. Proton donor; for dephosphorylation activity is Asp-178. The tract at residues 202–211 (MEIRGIGIID) is important for the catalytic mechanism of both phosphorylation and dephosphorylation. Mg(2+) is bound at residue Glu-203. Arg-244 is a catalytic residue. Positions 265 to 270 (PVKTGR) are important for the catalytic mechanism of dephosphorylation.

Belongs to the HPrK/P family. As to quaternary structure, homohexamer. The cofactor is Mg(2+).

It carries out the reaction [HPr protein]-L-serine + ATP = [HPr protein]-O-phospho-L-serine + ADP + H(+). The catalysed reaction is [HPr protein]-O-phospho-L-serine + phosphate + H(+) = [HPr protein]-L-serine + diphosphate. Its function is as follows. Catalyzes the ATP- as well as the pyrophosphate-dependent phosphorylation of a specific serine residue in HPr, a phosphocarrier protein of the phosphoenolpyruvate-dependent sugar phosphotransferase system (PTS). HprK/P also catalyzes the pyrophosphate-producing, inorganic phosphate-dependent dephosphorylation (phosphorolysis) of seryl-phosphorylated HPr (P-Ser-HPr). The two antagonistic activities of HprK/P are regulated by several intracellular metabolites, which change their concentration in response to the absence or presence of rapidly metabolisable carbon sources (glucose, fructose, etc.) in the growth medium. Therefore, by controlling the phosphorylation state of HPr, HPrK/P is a sensor enzyme that plays a major role in the regulation of carbon metabolism and sugar transport: it mediates carbon catabolite repression (CCR), and regulates PTS-catalyzed carbohydrate uptake and inducer exclusion. This is HPr kinase/phosphorylase from Limosilactobacillus reuteri (strain DSM 20016) (Lactobacillus reuteri).